Reading from the N-terminus, the 675-residue chain is Protein distal antenna (675 aa).

The 52-residue stretch at 5–56 (TKGKRPLRHLTATDKIDAIQRIHDGESKASVARDIGVPESTLRGWCKNEEKL) folds into the HTH psq-type domain. The segment at residues 32–52 (KASVARDIGVPESTLRGWCKN) is a DNA-binding region (H-T-H motif). Disordered stretches follow at residues 239-269 (QSLRNARPKANTSQSPRTSNLSDVNGDKNPS), 337-393 (LYSS…PEDT), 458-534 (LNII…SKCN), 546-596 (FQNP…AHKS), and 655-675 (ERQQQNAVSSGEERTRVRRRK). Residues 339 to 368 (SSMPRPSSPQQSSSPPQQHQQVQHHPSTQT) show a composition bias toward low complexity. Residues 369 to 384 (PTPPIVSTPQPTPPSS) are compositionally biased toward pro residues. The segment covering 469–478 (VKSEPEDLSN) has biased composition (basic and acidic residues). Over residues 479-493 (HNHSSSNAAAVAAPA) the composition is skewed to low complexity. Positions 499 to 508 (FNPSPSTSAK) are enriched in polar residues. A compositionally biased stretch (acidic residues) spans 513–528 (QEDDEEQAGPADDESP). A compositionally biased stretch (low complexity) spans 559–579 (NLSIRSNNSPRRRSVSPAVSN).

As to quaternary structure, homomers. Interacts with itself, danr, ey and dac to form a complex (or complexes) containing the RD factors.

The protein localises to the nucleus. In terms of biological role, probable transcription factor with a role in the retinal determination (RD) network. Contributes to differentiation of antenna-specific characteristics. The sequence is that of Protein distal antenna from Aedes aegypti (Yellowfever mosquito).